We begin with the raw amino-acid sequence, 222 residues long: Orotate phosphoribosyltransferase (222 aa).

Lys-29 is a binding site for 5-phospho-alpha-D-ribose 1-diphosphate. Orotate is bound at residue 37–38 (FF). 5-phospho-alpha-D-ribose 1-diphosphate is bound by residues 75–76 (YK), Arg-101, Lys-102, Lys-105, His-107, and 126–134 (DDVISAGTS). Residues Ser-130 and Arg-158 each coordinate orotate.

It belongs to the purine/pyrimidine phosphoribosyltransferase family. PyrE subfamily. As to quaternary structure, homodimer. Requires Mg(2+) as cofactor.

The enzyme catalyses orotidine 5'-phosphate + diphosphate = orotate + 5-phospho-alpha-D-ribose 1-diphosphate. It functions in the pathway pyrimidine metabolism; UMP biosynthesis via de novo pathway; UMP from orotate: step 1/2. Catalyzes the transfer of a ribosyl phosphate group from 5-phosphoribose 1-diphosphate to orotate, leading to the formation of orotidine monophosphate (OMP). This Polynucleobacter asymbioticus (strain DSM 18221 / CIP 109841 / QLW-P1DMWA-1) (Polynucleobacter necessarius subsp. asymbioticus) protein is Orotate phosphoribosyltransferase.